Reading from the N-terminus, the 179-residue chain is Inner membrane-spanning protein YciB (179 aa).

The next 5 helical transmembrane spans lie at 22–42 (IYAA…YSWV), 50–70 (MALI…FFHN), 76–96 (WKVT…QWVM), 121–141 (LAWA…AFWL), and 149–169 (FKVF…GVYI).

It belongs to the YciB family.

Its subcellular location is the cell inner membrane. Functionally, plays a role in cell envelope biogenesis, maintenance of cell envelope integrity and membrane homeostasis. This chain is Inner membrane-spanning protein YciB, found in Salmonella dublin (strain CT_02021853).